The primary structure comprises 297 residues: 4-diphosphocytidyl-2-C-methyl-D-erythritol kinase (297 aa).

K19 is a catalytic residue. 105 to 115 (PIASGIGGGSA) provides a ligand contact to ATP. D147 is an active-site residue.

The protein belongs to the GHMP kinase family. IspE subfamily.

It catalyses the reaction 4-CDP-2-C-methyl-D-erythritol + ATP = 4-CDP-2-C-methyl-D-erythritol 2-phosphate + ADP + H(+). It participates in isoprenoid biosynthesis; isopentenyl diphosphate biosynthesis via DXP pathway; isopentenyl diphosphate from 1-deoxy-D-xylulose 5-phosphate: step 3/6. Functionally, catalyzes the phosphorylation of the position 2 hydroxy group of 4-diphosphocytidyl-2C-methyl-D-erythritol. This is 4-diphosphocytidyl-2-C-methyl-D-erythritol kinase from Rhizobium etli (strain CIAT 652).